The chain runs to 790 residues: Phenylalanine--tRNA ligase beta subunit (790 aa).

The tRNA-binding domain maps to 39–154 (PDSLNTVVTG…ADTPLGESAC (116 aa)). One can recognise a B5 domain in the interval 404 to 483 (FSPLSLSVRP…FVQKTQKILP (80 aa)). Residues Asp457, Asp463, Glu466, and Glu467 each contribute to the Mg(2+) site. The FDX-ACB domain maps to 694–790 (PIYPASSRDI…KLANIGQGNS (97 aa)).

Belongs to the phenylalanyl-tRNA synthetase beta subunit family. Type 1 subfamily. As to quaternary structure, tetramer of two alpha and two beta subunits. Requires Mg(2+) as cofactor.

It is found in the cytoplasm. The catalysed reaction is tRNA(Phe) + L-phenylalanine + ATP = L-phenylalanyl-tRNA(Phe) + AMP + diphosphate + H(+). The polypeptide is Phenylalanine--tRNA ligase beta subunit (pheT) (Chlamydia trachomatis serovar D (strain ATCC VR-885 / DSM 19411 / UW-3/Cx)).